A 220-amino-acid polypeptide reads, in one-letter code: NADH-quinone oxidoreductase subunit B (220 aa).

[4Fe-4S] cluster-binding residues include Cys-37, Cys-38, Cys-103, and Cys-132. The interval 174-220 is disordered; the sequence is PSSERYAPKNRSQRKLAERQQAAQRREMGAEKPLGALEERAELNAGR. Basic and acidic residues predominate over residues 210–220; that stretch reads LEERAELNAGR.

This sequence belongs to the complex I 20 kDa subunit family. As to quaternary structure, NDH-1 is composed of 14 different subunits. Subunits NuoB, C, D, E, F, and G constitute the peripheral sector of the complex. The cofactor is [4Fe-4S] cluster.

It is found in the cell membrane. It carries out the reaction a quinone + NADH + 5 H(+)(in) = a quinol + NAD(+) + 4 H(+)(out). In terms of biological role, NDH-1 shuttles electrons from NADH, via FMN and iron-sulfur (Fe-S) centers, to quinones in the respiratory chain. The immediate electron acceptor for the enzyme in this species is believed to be a menaquinone. Couples the redox reaction to proton translocation (for every two electrons transferred, four hydrogen ions are translocated across the cytoplasmic membrane), and thus conserves the redox energy in a proton gradient. The polypeptide is NADH-quinone oxidoreductase subunit B (Saccharopolyspora erythraea (strain ATCC 11635 / DSM 40517 / JCM 4748 / NBRC 13426 / NCIMB 8594 / NRRL 2338)).